A 209-amino-acid polypeptide reads, in one-letter code: Thymidine kinase (209 aa).

Residues 9-16 (AAMNAGKS) and 88-91 (DEAQ) contribute to the ATP site. Residue E89 is the Proton acceptor of the active site. Zn(2+)-binding residues include C146, C148, C183, and H186.

This sequence belongs to the thymidine kinase family. As to quaternary structure, homotetramer.

Its subcellular location is the cytoplasm. It catalyses the reaction thymidine + ATP = dTMP + ADP + H(+). This Legionella pneumophila (strain Lens) protein is Thymidine kinase.